Here is a 279-residue protein sequence, read N- to C-terminus: Troponin T, fast skeletal muscle (279 aa).

The span at 1–21 (MSDEEVEHVEEQYEEEEEAQE) shows a compositional bias: acidic residues. A disordered region spans residues 1–82 (MSDEEVEHVE…EKVDFDDIQK (82 aa)). Serine 2 is subject to N-acetylserine. Serine 2 carries the phosphoserine modification. Basic and acidic residues-rich tracts occupy residues 28-49 (EVHE…ALED) and 70-82 (PEGE…DIQK). Serine 98 carries the post-translational modification Phosphoserine. The span at 121–163 (RAERAEQQRIRAEKERERQNRLAEEKARREEEDAKRRAEEDLK) shows a compositional bias: basic and acidic residues. The disordered stretch occupies residues 121–200 (RAERAEQQRI…TAREMKKKIL (80 aa)). A phosphoserine mark is found at serine 169, serine 176, and serine 177. Basic and acidic residues predominate over residues 191–200 (TAREMKKKIL). At serine 213 the chain carries Phosphoserine. The residue at position 229 (tyrosine 229) is a Phosphotyrosine.

This sequence belongs to the troponin T family.

In terms of biological role, troponin T is the tropomyosin-binding subunit of troponin, the thin filament regulatory complex which confers calcium-sensitivity to striated muscle actomyosin ATPase activity. The protein is Troponin T, fast skeletal muscle (TNNT3) of Oryctolagus cuniculus (Rabbit).